The following is a 547-amino-acid chain: Hydroxylamine reductase (547 aa).

The [4Fe-4S] cluster site is built by cysteine 5, cysteine 8, cysteine 17, and cysteine 23. Hybrid [4Fe-2O-2S] cluster is bound by residues histidine 242, glutamate 266, cysteine 310, cysteine 401, cysteine 429, cysteine 454, glutamate 489, and lysine 491. A Cysteine persulfide modification is found at cysteine 401.

Belongs to the HCP family. Requires [4Fe-4S] cluster as cofactor. Hybrid [4Fe-2O-2S] cluster is required as a cofactor.

The protein resides in the cytoplasm. The enzyme catalyses A + NH4(+) + H2O = hydroxylamine + AH2 + H(+). Its function is as follows. Catalyzes the reduction of hydroxylamine to form NH(3) and H(2)O. The protein is Hydroxylamine reductase of Thermoanaerobacter pseudethanolicus (strain ATCC 33223 / 39E) (Clostridium thermohydrosulfuricum).